The chain runs to 782 residues: HHIP-like protein 1 (782 aa).

A signal peptide spans 1–19; the sequence is MARARAGALLALWVLGAAA. Intrachain disulfides connect cysteine 181–cysteine 521, cysteine 185–cysteine 528, cysteine 399–cysteine 417, and cysteine 484–cysteine 584. Asparagine 234 carries N-linked (GlcNAc...) asparagine glycosylation. The disordered stretch occupies residues 604-666; sequence EKFIPKTRST…RRGRLNSASR (63 aa). Residues 610–623 show a composition bias toward low complexity; the sequence is TRSTPRPTARAPTR. The segment covering 632-642 has biased composition (pro residues); it reads AAPPAPTPRPA. One can recognise an SRCR domain in the interval 673 to 776; the sequence is VRLVRPAGLS…HDEDAGVVCS (104 aa). 3 disulfides stabilise this stretch: cysteine 700-cysteine 765, cysteine 713-cysteine 775, and cysteine 745-cysteine 755.

Belongs to the HHIP family.

The protein resides in the secreted. The chain is HHIP-like protein 1 (HHIPL1) from Homo sapiens (Human).